Reading from the N-terminus, the 175-residue chain is Pre-mRNA-splicing factor SNT309 (175 aa).

Belongs to the NTC complex (or PRP19-associated complex), composed of at least CEF1, CLF1, ISY1, NTC20, SNT309, SYF1, SYF2, and PRP19. The NTC complex associates with the spliceosome after the release of the U1 and U4 snRNAs and forms the CWC spliceosome subcomplex (or CEF1-associated complex) reminiscent of a late-stage spliceosome composed also of the U2, U5 and U6 snRNAs and at least BUD13, BUD31, BRR2, CDC40, CUS1, CWC2, CWC15, CWC21, CWC22, CWC23, CWC24, CWC25, CWC27, ECM2, HSH155, IST3, LEA1, MSL1, PRP8, PRP9, PRP11, PRP21, PRP22, PRP45, PRP46, SLU7, SMB1, SMD1, SMD2, SMD3, SMX2, SMX3, SNU114, SPP2, RSE1 and YJU2. Interacts with PRP19.

The protein resides in the nucleus. Involved in pre-mRNA splicing by stabilizing the NTC (or PRP19-associated complex). As a component of the NTC complex, associates to the spliceosome to mediate conformational rearrangement or to stabilize the structure of the spliceosome after U4 snRNA dissociation, which leads to spliceosome maturation. This chain is Pre-mRNA-splicing factor SNT309 (SNT309), found in Saccharomyces cerevisiae (strain ATCC 204508 / S288c) (Baker's yeast).